The primary structure comprises 66 residues: Large ribosomal subunit protein bL35 (66 aa).

This sequence belongs to the bacterial ribosomal protein bL35 family.

The protein is Large ribosomal subunit protein bL35 of Thermodesulfovibrio yellowstonii (strain ATCC 51303 / DSM 11347 / YP87).